The primary structure comprises 645 residues: Translation factor GUF1, mitochondrial (645 aa).

Positions Glu44–Thr228 constitute a tr-type G domain. Residues Ala53 to Ser60, Asp120 to His124, and Asn174 to Asp177 each bind GTP.

The protein belongs to the TRAFAC class translation factor GTPase superfamily. Classic translation factor GTPase family. LepA subfamily.

It is found in the mitochondrion inner membrane. It catalyses the reaction GTP + H2O = GDP + phosphate + H(+). Its function is as follows. Promotes mitochondrial protein synthesis. May act as a fidelity factor of the translation reaction, by catalyzing a one-codon backward translocation of tRNAs on improperly translocated ribosomes. Binds to mitochondrial ribosomes in a GTP-dependent manner. In Saccharomyces cerevisiae (strain RM11-1a) (Baker's yeast), this protein is Translation factor GUF1, mitochondrial.